The sequence spans 422 residues: UDP-N-acetylglucosamine 1-carboxyvinyltransferase (422 aa).

22-23 (KN) lines the phosphoenolpyruvate pocket. Arg-94 serves as a coordination point for UDP-N-acetyl-alpha-D-glucosamine. Catalysis depends on Cys-118, which acts as the Proton donor. Cys-118 is subject to 2-(S-cysteinyl)pyruvic acid O-phosphothioketal. UDP-N-acetyl-alpha-D-glucosamine contacts are provided by residues 123–127 (RPIDL), Asp-309, and Leu-331.

It belongs to the EPSP synthase family. MurA subfamily.

The protein resides in the cytoplasm. The catalysed reaction is phosphoenolpyruvate + UDP-N-acetyl-alpha-D-glucosamine = UDP-N-acetyl-3-O-(1-carboxyvinyl)-alpha-D-glucosamine + phosphate. It participates in cell wall biogenesis; peptidoglycan biosynthesis. In terms of biological role, cell wall formation. Adds enolpyruvyl to UDP-N-acetylglucosamine. In Sulfurimonas denitrificans (strain ATCC 33889 / DSM 1251) (Thiomicrospira denitrificans (strain ATCC 33889 / DSM 1251)), this protein is UDP-N-acetylglucosamine 1-carboxyvinyltransferase.